The chain runs to 494 residues: 3-octaprenyl-4-hydroxybenzoate carboxy-lyase (494 aa).

Residue Asn-172 coordinates Mn(2+). Residues 175–177 (IYR), 189–191 (RWL), and 194–195 (RG) contribute to the prenylated FMN site. A Mn(2+)-binding site is contributed by Glu-238. The active-site Proton donor is the Asp-287.

This sequence belongs to the UbiD family. In terms of assembly, homohexamer. Requires prenylated FMN as cofactor. Mn(2+) is required as a cofactor.

It localises to the cell membrane. The catalysed reaction is a 4-hydroxy-3-(all-trans-polyprenyl)benzoate + H(+) = a 2-(all-trans-polyprenyl)phenol + CO2. It functions in the pathway cofactor biosynthesis; ubiquinone biosynthesis. In terms of biological role, catalyzes the decarboxylation of 3-octaprenyl-4-hydroxy benzoate to 2-octaprenylphenol, an intermediate step in ubiquinone biosynthesis. This Escherichia coli O9:H4 (strain HS) protein is 3-octaprenyl-4-hydroxybenzoate carboxy-lyase.